The sequence spans 102 residues: ATP-dependent Clp protease adapter protein ClpS (102 aa).

The protein belongs to the ClpS family. Binds to the N-terminal domain of the chaperone ClpA.

Involved in the modulation of the specificity of the ClpAP-mediated ATP-dependent protein degradation. In Desulfotalea psychrophila (strain LSv54 / DSM 12343), this protein is ATP-dependent Clp protease adapter protein ClpS.